The primary structure comprises 122 residues: Large ribosomal subunit protein uL14c (122 aa).

The protein belongs to the universal ribosomal protein uL14 family. As to quaternary structure, part of the 50S ribosomal subunit.

It localises to the plastid. It is found in the chloroplast. Binds to 23S rRNA. The protein is Large ribosomal subunit protein uL14c of Daucus carota (Wild carrot).